Reading from the N-terminus, the 150-residue chain is Cytochrome c oxidase subunit 5A, mitochondrial (150 aa).

The N-terminal 41 residues, 1 to 41, are a transit peptide targeting the mitochondrion; the sequence is MLGAALRRCAVAATTRAGPRGLLHSARTPGPAAAIQSVRCY. Positions 2–17 match the SIFI-degron motif; the sequence is LGAALRRCAVAATTRA. 2 positions are modified to N6-acetyllysine: lysine 87 and lysine 113. A Phosphothreonine modification is found at threonine 141.

Belongs to the cytochrome c oxidase subunit 5A family. In terms of assembly, component of the cytochrome c oxidase (complex IV, CIV), a multisubunit enzyme composed of 14 subunits. The complex is composed of a catalytic core of 3 subunits MT-CO1, MT-CO2 and MT-CO3, encoded in the mitochondrial DNA, and 11 supernumerary subunits COX4I, COX5A, COX5B, COX6A, COX6B, COX6C, COX7A, COX7B, COX7C, COX8 and NDUFA4, which are encoded in the nuclear genome. The complex exists as a monomer or a dimer and forms supercomplexes (SCs) in the inner mitochondrial membrane with NADH-ubiquinone oxidoreductase (complex I, CI) and ubiquinol-cytochrome c oxidoreductase (cytochrome b-c1 complex, complex III, CIII), resulting in different assemblies (supercomplex SCI(1)III(2)IV(1) and megacomplex MCI(2)III(2)IV(2)). Interacts with AFG1L. Interacts with RAB5IF. In response to mitochondrial stress, the precursor protein is ubiquitinated by the SIFI complex in the cytoplasm before mitochondrial import, leading to its degradation. Within the SIFI complex, UBR4 initiates ubiquitin chain that are further elongated or branched by KCMF1.

It localises to the mitochondrion inner membrane. The protein operates within energy metabolism; oxidative phosphorylation. Functionally, component of the cytochrome c oxidase, the last enzyme in the mitochondrial electron transport chain which drives oxidative phosphorylation. The respiratory chain contains 3 multisubunit complexes succinate dehydrogenase (complex II, CII), ubiquinol-cytochrome c oxidoreductase (cytochrome b-c1 complex, complex III, CIII) and cytochrome c oxidase (complex IV, CIV), that cooperate to transfer electrons derived from NADH and succinate to molecular oxygen, creating an electrochemical gradient over the inner membrane that drives transmembrane transport and the ATP synthase. Cytochrome c oxidase is the component of the respiratory chain that catalyzes the reduction of oxygen to water. Electrons originating from reduced cytochrome c in the intermembrane space (IMS) are transferred via the dinuclear copper A center (CU(A)) of subunit 2 and heme A of subunit 1 to the active site in subunit 1, a binuclear center (BNC) formed by heme A3 and copper B (CU(B)). The BNC reduces molecular oxygen to 2 water molecules using 4 electrons from cytochrome c in the IMS and 4 protons from the mitochondrial matrix. In Pan troglodytes (Chimpanzee), this protein is Cytochrome c oxidase subunit 5A, mitochondrial (COX5A).